We begin with the raw amino-acid sequence, 872 residues long: Alanine--tRNA ligase (872 aa).

Residues H567, H571, C669, and H673 each coordinate Zn(2+).

Belongs to the class-II aminoacyl-tRNA synthetase family. Zn(2+) serves as cofactor.

The protein resides in the cytoplasm. The enzyme catalyses tRNA(Ala) + L-alanine + ATP = L-alanyl-tRNA(Ala) + AMP + diphosphate. Its function is as follows. Catalyzes the attachment of alanine to tRNA(Ala) in a two-step reaction: alanine is first activated by ATP to form Ala-AMP and then transferred to the acceptor end of tRNA(Ala). Also edits incorrectly charged Ser-tRNA(Ala) and Gly-tRNA(Ala) via its editing domain. In Streptococcus agalactiae serotype V (strain ATCC BAA-611 / 2603 V/R), this protein is Alanine--tRNA ligase.